The sequence spans 168 residues: S-ribosylhomocysteine lyase (168 aa).

Residues His-54, His-58, and Cys-128 each coordinate Fe cation.

This sequence belongs to the LuxS family. Homodimer. Fe cation is required as a cofactor.

The enzyme catalyses S-(5-deoxy-D-ribos-5-yl)-L-homocysteine = (S)-4,5-dihydroxypentane-2,3-dione + L-homocysteine. In terms of biological role, involved in the synthesis of autoinducer 2 (AI-2) which is secreted by bacteria and is used to communicate both the cell density and the metabolic potential of the environment. The regulation of gene expression in response to changes in cell density is called quorum sensing. Catalyzes the transformation of S-ribosylhomocysteine (RHC) to homocysteine (HC) and 4,5-dihydroxy-2,3-pentadione (DPD). The chain is S-ribosylhomocysteine lyase from Histophilus somni (strain 2336) (Haemophilus somnus).